The primary structure comprises 192 residues: Adenylate kinase (192 aa).

An ATP-binding site is contributed by 10 to 18 (GVPGVGGTT).

This sequence belongs to the archaeal adenylate kinase family. As to quaternary structure, monomer.

It localises to the cytoplasm. The enzyme catalyses AMP + ATP = 2 ADP. The protein is Adenylate kinase (adkA) of Methanotorris igneus (Methanococcus igneus).